We begin with the raw amino-acid sequence, 172 residues long: Adenine phosphoribosyltransferase (172 aa).

The protein belongs to the purine/pyrimidine phosphoribosyltransferase family. As to quaternary structure, homodimer.

The protein resides in the cytoplasm. It catalyses the reaction AMP + diphosphate = 5-phospho-alpha-D-ribose 1-diphosphate + adenine. The protein operates within purine metabolism; AMP biosynthesis via salvage pathway; AMP from adenine: step 1/1. Catalyzes a salvage reaction resulting in the formation of AMP, that is energically less costly than de novo synthesis. The protein is Adenine phosphoribosyltransferase of Staphylococcus carnosus (strain TM300).